Reading from the N-terminus, the 371-residue chain is Probable inactive methyltransferase Os04g0175900 (371 aa).

137–143 serves as a coordination point for substrate; sequence LDVDEDN. Positions 170–188 are substrate binding; that stretch reads LFEYMGTNHRFNMLFNQAM. S-adenosyl-L-methionine contacts are provided by Gly216, Asp239, Met260, and Lys273.

Belongs to the class I-like SAM-binding methyltransferase superfamily. Cation-independent O-methyltransferase family. COMT subfamily.

In Oryza sativa subsp. japonica (Rice), this protein is Probable inactive methyltransferase Os04g0175900.